A 170-amino-acid polypeptide reads, in one-letter code: Peptide deformylase (170 aa).

Fe cation contacts are provided by Cys94 and His136. The active site involves Glu137. His140 serves as a coordination point for Fe cation.

The protein belongs to the polypeptide deformylase family. Requires Fe(2+) as cofactor.

The catalysed reaction is N-terminal N-formyl-L-methionyl-[peptide] + H2O = N-terminal L-methionyl-[peptide] + formate. In terms of biological role, removes the formyl group from the N-terminal Met of newly synthesized proteins. Requires at least a dipeptide for an efficient rate of reaction. N-terminal L-methionine is a prerequisite for activity but the enzyme has broad specificity at other positions. The protein is Peptide deformylase of Stenotrophomonas maltophilia (strain R551-3).